The following is a 439-amino-acid chain: GTPase Obg (439 aa).

An Obg domain is found at glycine 3–leucine 162. Residues alanine 163 to arginine 333 form the OBG-type G domain. GTP contacts are provided by residues glycine 169 to serine 176, phenylalanine 194 to glutamine 198, aspartate 215 to glycine 218, asparagine 285 to aspartate 288, and serine 314 to alanine 316. Residues serine 176 and threonine 196 each coordinate Mg(2+). The OCT domain occupies valine 351 to aspartate 428.

This sequence belongs to the TRAFAC class OBG-HflX-like GTPase superfamily. OBG GTPase family. In terms of assembly, monomer. Requires Mg(2+) as cofactor.

It is found in the cytoplasm. In terms of biological role, an essential GTPase which binds GTP, GDP and possibly (p)ppGpp with moderate affinity, with high nucleotide exchange rates and a fairly low GTP hydrolysis rate. Plays a role in control of the cell cycle, stress response, ribosome biogenesis and in those bacteria that undergo differentiation, in morphogenesis control. The protein is GTPase Obg of Roseiflexus castenholzii (strain DSM 13941 / HLO8).